A 96-amino-acid chain; its full sequence is Small ribosomal subunit protein bS20 (96 aa).

The segment at 1–27 is disordered; it reads MAKQEVAAKKVKRPTALKRDLQNKKKR.

The protein belongs to the bacterial ribosomal protein bS20 family.

In terms of biological role, binds directly to 16S ribosomal RNA. The protein is Small ribosomal subunit protein bS20 of Protochlamydia amoebophila (strain UWE25).